The following is a 24-amino-acid chain: Xenoposin precursor fragment B2 (24 aa).

In terms of tissue distribution, expressed by the skin glands.

Its subcellular location is the secreted. In terms of biological role, has antimicrobial activity against Gram-negative bacterium E.coli ATCC 25922 (MIC=100 uM), Gram-positive bacterium S.auerus ATCC 25923 (MIC=25 uM). This chain is Xenoposin precursor fragment B2, found in Xenopus borealis (Kenyan clawed frog).